Consider the following 330-residue polypeptide: Exostosin-like 2 (330 aa).

The Cytoplasmic segment spans residues 1–21 (MMRGCHICKLPGRVMGIRVLR). Residues 22–42 (FSLVVILVLLLVAGALTNLLP) traverse the membrane as a helical; Signal-anchor for type II membrane protein segment. Over 43-330 (NIKEDKMLTL…FPYANHKSKM (288 aa)) the chain is Lumenal. Q72 is a UDP-N-acetyl-alpha-D-galactosamine binding site. Position 72 (Q72) interacts with UDP-N-acetyl-alpha-D-glucosamine. N75 carries N-linked (GlcNAc...) asparagine glycosylation. 8 residues coordinate UDP-N-acetyl-alpha-D-galactosamine: R76, N101, N130, R135, D151, D152, D153, and D245. The UDP-N-acetyl-alpha-D-glucosamine site is built by R76, N101, N130, R135, D151, D152, D153, D245, D246, and R293. D153 is a binding site for Mn(2+). C244 and C296 are disulfide-bonded. The active site involves D246. UDP-N-acetyl-alpha-D-galactosamine is bound at residue R293.

This sequence belongs to the glycosyltransferase 47 family. The cofactor is Mn(2+).

The protein localises to the endoplasmic reticulum membrane. The enzyme catalyses 3-O-(beta-D-GlcA-(1-&gt;3)-beta-D-Gal-(1-&gt;3)-beta-D-Gal-(1-&gt;4)-beta-D-Xyl)-L-seryl-[protein] + UDP-N-acetyl-alpha-D-glucosamine = 3-O-(alpha-D-GlcNAc-(1-&gt;4)-beta-D-GlcA-(1-&gt;3)-beta-D-Gal-(1-&gt;3)-beta-D-Gal-(1-&gt;4)-beta-D-Xyl)-L-seryl-[protein] + UDP + H(+). Its function is as follows. Glycosyltransferase required for the biosynthesis of heparan-sulfate and responsible for the alternating addition of beta-1-4-linked glucuronic acid (GlcA) and alpha-1-4-linked N-acetylglucosamine (GlcNAc) units to nascent heparan sulfate chains. The sequence is that of Exostosin-like 2 (Extl2) from Mus musculus (Mouse).